The following is a 161-amino-acid chain: Nucleotide-binding protein SO_3815 (161 aa).

Belongs to the YajQ family.

Nucleotide-binding protein. The polypeptide is Nucleotide-binding protein SO_3815 (Shewanella oneidensis (strain ATCC 700550 / JCM 31522 / CIP 106686 / LMG 19005 / NCIMB 14063 / MR-1)).